The chain runs to 224 residues: Synaptogyrin-2 (224 aa).

At M1 the chain carries N-acetylmethionine. S3 carries the post-translational modification Phosphoserine. One can recognise an MARVEL domain in the interval 20–171; the sequence is FLKQPQVVVR…LAFLAYQRYK (152 aa). Helical transmembrane passes span 26 to 46, 73 to 93, 105 to 125, and 147 to 167; these read VVVR…IFGE, AIGV…IYFP, VIGD…GFCF, and AAIT…FLAY. A disordered region spans residues 196-224; sequence PGVPADTYQQPPFTQNAESTEGYQPPPVY. Residues 202–217 are compositionally biased toward polar residues; that stretch reads TYQQPPFTQNAESTEG.

The protein belongs to the synaptogyrin family. May be tyrosine phosphorylated by Src.

The protein resides in the cytoplasmic vesicle membrane. It localises to the cytoplasmic vesicle. Its subcellular location is the secretory vesicle. The protein localises to the synaptic vesicle membrane. In terms of biological role, may play a role in regulated exocytosis. In neuronal cells, modulates the localization of synaptophysin/SYP into synaptic-like microvesicles and may therefore play a role in the formation and/or the maturation of this vesicles. May also play a role in GLUT4 storage and transport to the plasma membrane. The protein is Synaptogyrin-2 of Bos taurus (Bovine).